The following is a 151-amino-acid chain: Large ribosomal subunit protein bL17 (151 aa).

This sequence belongs to the bacterial ribosomal protein bL17 family. Part of the 50S ribosomal subunit. Contacts protein L32.

The sequence is that of Large ribosomal subunit protein bL17 from Chlorobium limicola (strain DSM 245 / NBRC 103803 / 6330).